A 167-amino-acid chain; its full sequence is uncharacterized protein (167 aa).

The segment at Ser-115 to Lys-167 is disordered.

This is an uncharacterized protein from Homo sapiens (Human).